The primary structure comprises 248 residues: Carbohydrate deacetylase (248 aa).

Residues histidine 59 and histidine 121 each contribute to the Mg(2+) site.

The protein belongs to the YdjC deacetylase family. Mg(2+) is required as a cofactor.

In terms of biological role, probably catalyzes the deacetylation of acetylated carbohydrates an important step in the degradation of oligosaccharides. This chain is Carbohydrate deacetylase, found in Brevibacillus brevis (strain 47 / JCM 6285 / NBRC 100599).